We begin with the raw amino-acid sequence, 363 residues long: Probable dual-specificity RNA methyltransferase RlmN (363 aa).

Catalysis depends on glutamate 99, which acts as the Proton acceptor. One can recognise a Radical SAM core domain in the interval 105–341 (SENRMTACVS…VTVRKSHGAS (237 aa)). Residues cysteine 112 and cysteine 346 are joined by a disulfide bond. 3 residues coordinate [4Fe-4S] cluster: cysteine 119, cysteine 123, and cysteine 126. S-adenosyl-L-methionine is bound by residues 171 to 172 (GE), serine 204, 227 to 229 (SLH), and asparagine 303. The S-methylcysteine intermediate role is filled by cysteine 346.

The protein belongs to the radical SAM superfamily. RlmN family. The cofactor is [4Fe-4S] cluster.

The protein resides in the cytoplasm. The catalysed reaction is adenosine(2503) in 23S rRNA + 2 reduced [2Fe-2S]-[ferredoxin] + 2 S-adenosyl-L-methionine = 2-methyladenosine(2503) in 23S rRNA + 5'-deoxyadenosine + L-methionine + 2 oxidized [2Fe-2S]-[ferredoxin] + S-adenosyl-L-homocysteine. The enzyme catalyses adenosine(37) in tRNA + 2 reduced [2Fe-2S]-[ferredoxin] + 2 S-adenosyl-L-methionine = 2-methyladenosine(37) in tRNA + 5'-deoxyadenosine + L-methionine + 2 oxidized [2Fe-2S]-[ferredoxin] + S-adenosyl-L-homocysteine. Its function is as follows. Specifically methylates position 2 of adenine 2503 in 23S rRNA and position 2 of adenine 37 in tRNAs. The chain is Probable dual-specificity RNA methyltransferase RlmN from Chlorobium phaeobacteroides (strain DSM 266 / SMG 266 / 2430).